Consider the following 544-residue polypeptide: DNA mismatch repair protein MutL (544 aa).

It belongs to the DNA mismatch repair MutL/HexB family.

This protein is involved in the repair of mismatches in DNA. It is required for dam-dependent methyl-directed DNA mismatch repair. May act as a 'molecular matchmaker', a protein that promotes the formation of a stable complex between two or more DNA-binding proteins in an ATP-dependent manner without itself being part of a final effector complex. This Thermodesulfovibrio yellowstonii (strain ATCC 51303 / DSM 11347 / YP87) protein is DNA mismatch repair protein MutL.